A 248-amino-acid chain; its full sequence is tRNA pseudouridine synthase A (248 aa).

Residue Asp53 is the Nucleophile of the active site. Tyr111 contacts substrate.

The protein belongs to the tRNA pseudouridine synthase TruA family. Homodimer.

The enzyme catalyses uridine(38/39/40) in tRNA = pseudouridine(38/39/40) in tRNA. Functionally, formation of pseudouridine at positions 38, 39 and 40 in the anticodon stem and loop of transfer RNAs. The polypeptide is tRNA pseudouridine synthase A (Streptococcus thermophilus (strain CNRZ 1066)).